The chain runs to 347 residues: MVRLDLPWDLVDEILSRLPATSLGRLRFTCKRWNALFKDPEFITKQFHKAAKQDLVLMLSNFGVYSMSTNLKEIPNNIEIAQVFHCNGLLLCSTEEGNKTKLVVVNPCTGQTRWIEPRTDYNYNHDIALGYGNNSTKKSYDSYKILRITYGCKLVEIFELKSNSWRVLSKVHPNVEKHYYGGVSFKGNTYWLSYTKFNILSFDFTTETFRSVPLPFLYQDGFVTLALSVVREEQLLLLRSRFDMGQVGIWMCNKIDTETVLSWSKSFTLEFDSLRDLPVMSILRIFIEEDKKVIVVDCDDRWKENMIYIVGKNGFKKLSYEKDRSNLWRLPFFFSYVPSLVGLYPPM.

One can recognise an F-box domain in the interval 1–50 (MVRLDLPWDLVDEILSRLPATSLGRLRFTCKRWNALFKDPEFITKQFHKA). LRR repeat units follow at residues 59 to 82 (LSNFGVYSMSTNLKEIPNNIEIAQ), 152 to 177 (CKLVEIFELKSNSWRVLSKVHPNVEK), 196 to 220 (KFNILSFDFTTETFRSVPLPFLYQD), and 261 to 285 (LSWSKSFTLEFDSLRDLPVMSILRI). One copy of the Kelch 1 repeat lies at 138-187 (KSYDSYKILRITYGCKLVEIFELKSNSWRVLSKVHPNVEKHYYGGVSFKG). One copy of the Kelch 2 repeat lies at 306 to 347 (MIYIVGKNGFKKLSYEKDRSNLWRLPFFFSYVPSLVGLYPPM).

The chain is F-box/LRR-repeat/kelch-repeat protein At2g27520 from Arabidopsis thaliana (Mouse-ear cress).